We begin with the raw amino-acid sequence, 414 residues long: Gamma-glutamyl phosphate reductase (414 aa).

The protein belongs to the gamma-glutamyl phosphate reductase family.

The protein localises to the cytoplasm. It carries out the reaction L-glutamate 5-semialdehyde + phosphate + NADP(+) = L-glutamyl 5-phosphate + NADPH + H(+). It participates in amino-acid biosynthesis; L-proline biosynthesis; L-glutamate 5-semialdehyde from L-glutamate: step 2/2. Its function is as follows. Catalyzes the NADPH-dependent reduction of L-glutamate 5-phosphate into L-glutamate 5-semialdehyde and phosphate. The product spontaneously undergoes cyclization to form 1-pyrroline-5-carboxylate. This chain is Gamma-glutamyl phosphate reductase, found in Geobacillus kaustophilus (strain HTA426).